A 468-amino-acid chain; its full sequence is uncharacterized protein (468 aa).

The next 12 membrane-spanning stretches (helical) occupy residues L13–F33, L40–L60, A76–I96, L112–G132, F141–A161, L194–L214, V237–T257, P260–Q280, C328–I348, F354–G374, I414–V434, and A443–I463.

The protein belongs to the NhaC Na(+)/H(+) (TC 2.A.35) antiporter family.

It is found in the cell membrane. This is an uncharacterized protein from Haemophilus influenzae (strain ATCC 51907 / DSM 11121 / KW20 / Rd).